The chain runs to 413 residues: Terephthalate 1,2-dioxygenase, terminal oxygenase component subunit alpha 2 (413 aa).

The Rieske domain maps to 41–144 (NYLCLESEIP…CKEEHGPRKL (104 aa)). [2Fe-2S] cluster contacts are provided by cysteine 82, histidine 84, cysteine 102, and histidine 105.

This sequence belongs to the bacterial ring-hydroxylating dioxygenase alpha subunit family. In terms of assembly, heterotetramer composed of 2 alpha (TphA2I and TphA2II) and 2 beta (TphA3I and TphA3II) subunits. Part of a multicomponent enzyme system composed of a reductase (TphA1I or TphA1II) and a two-subunit oxygenase component (TphA2I or TphA2II and TphA3I or TphA3II). It depends on Fe cation as a cofactor. Requires [2Fe-2S] cluster as cofactor.

The enzyme catalyses terephthalate + NADH + O2 + H(+) = (3S,4R)-3,4-dihydroxycyclohexa-1,5-diene-1,4-dicarboxylate + NAD(+). Inhibited by EDTA. Component of the terephthalate 1,2-dioxygenase multicomponent enzyme system which catalyzes the dioxygenation of terephthalate (TER/TPA) to 1,2-dihydroxy-3,5-cyclohexadiene-1,4-dicarboxylic acid (DCD). It can also use 2,5-dicarboxypyridine (PDC) and 1,4-napthalenedicarboxylic acid (NDC) as substrates, and preferentially uses NADPH which is the physiological electron donor. The polypeptide is Terephthalate 1,2-dioxygenase, terminal oxygenase component subunit alpha 2 (tphA2II) (Comamonas sp).